A 287-amino-acid polypeptide reads, in one-letter code: ATP synthase subunit a (287 aa).

The next 6 membrane-spanning stretches (helical) occupy residues 37 to 57 (LDSVAVSVILGVLGLFVMWLA), 96 to 116 (FIAPLALTVFVWIFLMNAMDL), 144 to 164 (DLSTTLGLSSAVLILCFVYSI), 187 to 207 (PVFALILGVVNLLMQIIEYVA), 224 to 244 (ELVFMLIALMGGAAAMSLSGV), and 266 to 286 (TLQAFIFMMLTLIYLGQAHEA).

The protein belongs to the ATPase A chain family. As to quaternary structure, F-type ATPases have 2 components, CF(1) - the catalytic core - and CF(0) - the membrane proton channel. CF(1) has five subunits: alpha(3), beta(3), gamma(1), delta(1), epsilon(1). CF(0) has three main subunits: a(1), b(2) and c(9-12). The alpha and beta chains form an alternating ring which encloses part of the gamma chain. CF(1) is attached to CF(0) by a central stalk formed by the gamma and epsilon chains, while a peripheral stalk is formed by the delta and b chains.

The protein localises to the cell inner membrane. Functionally, key component of the proton channel; it plays a direct role in the translocation of protons across the membrane. The protein is ATP synthase subunit a of Acidovorax ebreus (strain TPSY) (Diaphorobacter sp. (strain TPSY)).